Consider the following 672-residue polypeptide: Flap endonuclease 1 (672 aa).

An N-domain region spans residues 1–106 (MGIKGLIGFL…QTLAKRKLLR (106 aa)). Asp34 provides a ligand contact to Mg(2+). DNA-binding residues include Arg47 and Arg72. Positions 88, 160, 162, 181, and 183 each coordinate Mg(2+). An I-domain region spans residues 124–252 (AIRKYVGRTV…KTAYNLIKKH (129 aa)). Glu160 serves as a coordination point for DNA. 2 residues coordinate DNA: Gly230 and Asp232. A Mg(2+)-binding site is contributed by Asp232. Positions 327–335 (TQLSLKSFF) are interaction with PCNA. The disordered stretch occupies residues 361-436 (VESAVDSTSD…DAKKRNKRVP (76 aa)). Over residues 370-382 (DDGKDEVPSDDKV) the composition is skewed to basic and acidic residues.

Belongs to the XPG/RAD2 endonuclease family. FEN1 subfamily. Interacts with PCNA. Three molecules of FEN1 bind to one PCNA trimer with each molecule binding to one PCNA monomer. PCNA stimulates the nuclease activity without altering cleavage specificity. It depends on Mg(2+) as a cofactor. In terms of processing, phosphorylated. Phosphorylation upon DNA damage induces relocalization to the nuclear plasma.

The protein localises to the nucleus. The protein resides in the nucleolus. Its subcellular location is the nucleoplasm. It is found in the mitochondrion. Functionally, structure-specific nuclease with 5'-flap endonuclease and 5'-3' exonuclease activities involved in DNA replication and repair. During DNA replication, cleaves the 5'-overhanging flap structure that is generated by displacement synthesis when DNA polymerase encounters the 5'-end of a downstream Okazaki fragment. It enters the flap from the 5'-end and then tracks to cleave the flap base, leaving a nick for ligation. Also involved in the long patch base excision repair (LP-BER) pathway, by cleaving within the apurinic/apyrimidinic (AP) site-terminated flap. Acts as a genome stabilization factor that prevents flaps from equilibrating into structures that lead to duplications and deletions. Also possesses 5'-3' exonuclease activity on nicked or gapped double-stranded DNA, and exhibits RNase H activity. Also involved in replication and repair of rDNA and in repairing mitochondrial DNA. This chain is Flap endonuclease 1, found in Babesia bovis.